Consider the following 451-residue polypeptide: uncharacterized protein (451 aa).

A TRAM domain is found at 2–60; it reads VVKVKQKIPLKIKRMGINGEGIGFYQKTLVFVPGALKGENIFCQITAVKRNFAEAKLLT. [4Fe-4S] cluster is bound by residues Cys73, Cys79, Cys82, and Cys162. Positions 283, 312, 333, and 381 each coordinate S-adenosyl-L-methionine. The active-site Nucleophile is Cys408.

This sequence belongs to the class I-like SAM-binding methyltransferase superfamily. RNA M5U methyltransferase family.

This is an uncharacterized protein from Streptococcus pyogenes serotype M3 (strain ATCC BAA-595 / MGAS315).